The chain runs to 1088 residues: Sterol regulatory element-binding protein 2 (1088 aa).

The transcriptional activation (acidic) stretch occupies residues 1 to 38; sequence METLTELGDELTLGDIDEMLQFVSNQVGEFPDLFEEQL. Residues 1-440 lie on the Cytoplasmic side of the membrane; it reads METLTELGDE…TGLGMMDRSR (440 aa). A compositionally biased stretch (polar residues) spans 59–70; it reads AAQQPYTTSAPQ. The segment at 59–87 is disordered; that stretch reads AAQQPYTTSAPQPQLLPVKAPPQATPQRT. Residues 290–340 enclose the bHLH domain; the sequence is ERRTTHNIIEKRYRSSINDKIMELKDLVMGTDAKMHKSGVLKKAIDYIKYL. A leucine-zipper region spans residues 340 to 361; it reads LQQVNQKLRQENMALKLANQKN. A disordered region spans residues 392–431; it reads SPPASDSGSPAVFSPYSVDSEPGSPLLDDEKVKDEPDSPT. The chain crosses the membrane as a helical span at residues 441–461; it reads MLLCTMTFLCLSFNPLTSLLH. Residues 462 to 494 lie on the Lumenal side of the membrane; that stretch reads PESGQYSERAVQHGTGRTMLGVEMSGFYGSWFD. The chain crosses the membrane as a helical span at residues 495 to 515; that stretch reads WLIPTIILWLVNGVIVLSVFM. The Cytoplasmic portion of the chain corresponds to 516-1088; that stretch reads KLLIHGEPVT…LSGGTAMAAS (573 aa).

This sequence belongs to the SREBP family. As to quaternary structure, forms a tight complex with scap, the SCAP-SREBP complex, in the endoplasmic reticulum membrane. In terms of assembly, homodimer; efficient DNA binding of the soluble transcription factor fragment requires dimerization with another bHLH protein. Post-translationally, processed in the Golgi apparatus, releasing the protein from the membrane. At low cholesterol the SCAP-SREBP complex is recruited into COPII vesicles for export from the endoplasmic reticulum. In the Golgi, complex SREBPs are cleaved sequentially by site-1 (MBTPS1, S1P) and site-2 (MBTPS2, S2P) proteases. The first cleavage by site-1 protease occurs within the luminal loop, the second cleavage by site-2 protease occurs within the first transmembrane domain, releasing the transcription factor from the Golgi membrane.

The protein resides in the endoplasmic reticulum membrane. Its subcellular location is the golgi apparatus membrane. The protein localises to the cytoplasmic vesicle. It localises to the COPII-coated vesicle membrane. It is found in the nucleus. Its function is as follows. Precursor of the transcription factor form (Processed sterol regulatory element-binding protein 2), which is embedded in the endoplasmic reticulum membrane. Low sterol concentrations promote processing of this form, releasing the transcription factor form that translocates into the nucleus and activates transcription of genes involved in cholesterol biosynthesis. In terms of biological role, key transcription factor that regulates expression of genes involved in cholesterol biosynthesis. Binds to the sterol regulatory element 1 (SRE-1) (5'-ATCACCCCAC-3'). Has dual sequence specificity binding to both an E-box motif (5'-ATCACGTGA-3') and to SRE-1 (5'-ATCACCCCAC-3'). Regulates transcription of genes related to cholesterol synthesis pathway. This Xenopus laevis (African clawed frog) protein is Sterol regulatory element-binding protein 2.